The primary structure comprises 153 residues: MKINVIIIDKKGKDQLYAPLIEHYKKISKPFAKVEVIELFDKEIAKAQDISPEAAQRSYSKALEKYLGSGINIALDPASKEVDSFEFAKLLKDSVTVNFYIGGAYGFERDFLSKCNNAVSFGKITLSHKLVKVVLMEQIFRGLTINHNHPYHK.

S-adenosyl-L-methionine-binding positions include L63, G102, and 121-126 (FGKITL).

Belongs to the RNA methyltransferase RlmH family. In terms of assembly, homodimer.

Its subcellular location is the cytoplasm. The catalysed reaction is pseudouridine(1915) in 23S rRNA + S-adenosyl-L-methionine = N(3)-methylpseudouridine(1915) in 23S rRNA + S-adenosyl-L-homocysteine + H(+). In terms of biological role, specifically methylates the pseudouridine at position 1915 (m3Psi1915) in 23S rRNA. This chain is Ribosomal RNA large subunit methyltransferase H, found in Sulfurovum sp. (strain NBC37-1).